A 138-amino-acid chain; its full sequence is MAGLQRSTISFRRQGSSGIVWDDRLIAELSQQAANDRKGETLQQDEQAKLITSEVQDQTTKPIAGEGLKPIRTDGGMERSRSNGGGAIRHHRNTGRVSPAVDPPSPRLSAFGCCSAFGKKQPGKKVNQRKRPAKRRSR.

Positions threonine 52 to arginine 138 are disordered. Positions lysine 69–arginine 81 are enriched in basic and acidic residues. A Phosphoserine modification is found at serine 98. At serine 105 the chain carries Phosphoserine; by MAPK6. Over residues glutamine 121–arginine 138 the composition is skewed to basic residues.

In terms of tissue distribution, expressed in developing cotyledons, mature cotyledons, cotyledon epidermis and stomata.

May play a role in the regulation of stomata patterning. This is MAPK kinase substrate protein At1g80180 from Arabidopsis thaliana (Mouse-ear cress).